The primary structure comprises 209 residues: Large ribosomal subunit protein uL3 (209 aa).

Residues 125–148 are disordered; that stretch reads RHGQSRGPMAHGSRYHRRPGSMGP.

This sequence belongs to the universal ribosomal protein uL3 family. As to quaternary structure, part of the 50S ribosomal subunit. Forms a cluster with proteins L14 and L19.

In terms of biological role, one of the primary rRNA binding proteins, it binds directly near the 3'-end of the 23S rRNA, where it nucleates assembly of the 50S subunit. The protein is Large ribosomal subunit protein uL3 of Lysinibacillus sphaericus (strain C3-41).